A 487-amino-acid chain; its full sequence is N-succinylglutamate 5-semialdehyde dehydrogenase (487 aa).

221-226 (GSSRTG) is an NAD(+) binding site. Residues glutamate 244 and cysteine 278 contribute to the active site.

The protein belongs to the aldehyde dehydrogenase family. AstD subfamily.

The catalysed reaction is N-succinyl-L-glutamate 5-semialdehyde + NAD(+) + H2O = N-succinyl-L-glutamate + NADH + 2 H(+). It functions in the pathway amino-acid degradation; L-arginine degradation via AST pathway; L-glutamate and succinate from L-arginine: step 4/5. Catalyzes the NAD-dependent reduction of succinylglutamate semialdehyde into succinylglutamate. This Pseudomonas putida (strain W619) protein is N-succinylglutamate 5-semialdehyde dehydrogenase.